The following is a 292-amino-acid chain: 4-hydroxy-tetrahydrodipicolinate synthase (292 aa).

Position 45 (Thr45) interacts with pyruvate. Tyr133 acts as the Proton donor/acceptor in catalysis. The Schiff-base intermediate with substrate role is filled by Lys161. Pyruvate is bound at residue Ile203.

It belongs to the DapA family. Homotetramer; dimer of dimers.

The protein localises to the cytoplasm. The enzyme catalyses L-aspartate 4-semialdehyde + pyruvate = (2S,4S)-4-hydroxy-2,3,4,5-tetrahydrodipicolinate + H2O + H(+). It participates in amino-acid biosynthesis; L-lysine biosynthesis via DAP pathway; (S)-tetrahydrodipicolinate from L-aspartate: step 3/4. In terms of biological role, catalyzes the condensation of (S)-aspartate-beta-semialdehyde [(S)-ASA] and pyruvate to 4-hydroxy-tetrahydrodipicolinate (HTPA). This Azoarcus sp. (strain BH72) protein is 4-hydroxy-tetrahydrodipicolinate synthase.